A 251-amino-acid chain; its full sequence is uncharacterized protein (251 aa).

Belongs to the chlamydial CPn_0206/CT_203/TC_0475 family.

This is an uncharacterized protein from Chlamydia trachomatis serovar D (strain ATCC VR-885 / DSM 19411 / UW-3/Cx).